Here is a 648-residue protein sequence, read N- to C-terminus: Golgin subfamily A member 8G (648 aa).

Positions 1-11 (MWPQARLPPHP) are enriched in pro residues. Disordered stretches follow at residues 1-84 (MWPQ…SATL) and 119-139 (NKQVEHQLEEEKKANNEKQKA). Residues 50–62 (TNGSIHETATSGG) show a composition bias toward polar residues. Coiled coils occupy residues 105–160 (VSQL…LNTD), 223–275 (LEQS…MSQE), and 318–424 (EVEL…QQKQ). Positions 121–139 (QVEHQLEEEKKANNEKQKA) are enriched in basic and acidic residues. 4 disordered regions span residues 356–376 (LREQEERLQEQQERLPEQEER), 434–461 (ALPGEGDGGGHLDSEGEEAPRPIPSIPQ), 508–549 (PITK…GVAA), and 600–624 (PVQGEAREGSPHDNPTAQPIVQDHQ). The span at 441-453 (GGGHLDSEGEEAP) shows a compositional bias: basic and acidic residues. Residues 521-534 (PGGGHHQAGPGQGG) are compositionally biased toward gly residues.

Belongs to the GOLGA8 family.

This Homo sapiens (Human) protein is Golgin subfamily A member 8G.